The chain runs to 272 residues: Cyclase-like protein 2 (272 aa).

The signal sequence occupies residues Met-1–Gln-17.

Belongs to the Cyclase 1 superfamily. In terms of tissue distribution, highly expressed in leaf sheaths and flag leaves. Expressed in roots, stems, leaf collars, glumes, young panicles and pistils.

It is found in the secreted. The protein localises to the extracellular space. The protein resides in the extracellular matrix. In terms of biological role, may be involved in response to stresses. This Oryza sativa subsp. japonica (Rice) protein is Cyclase-like protein 2.